The sequence spans 242 residues: Uridylate kinase (242 aa).

11–14 (KLSG) is an ATP binding site. The tract at residues 19 to 24 (GEKGAG) is involved in allosteric activation by GTP. A UMP-binding site is contributed by G53. ATP contacts are provided by G54 and R58. Residues D73 and 134-141 (IGSPYFST) contribute to the UMP site. The ATP site is built by N162, Y168, and D171.

This sequence belongs to the UMP kinase family. Homohexamer.

Its subcellular location is the cytoplasm. It carries out the reaction UMP + ATP = UDP + ADP. Its pathway is pyrimidine metabolism; CTP biosynthesis via de novo pathway; UDP from UMP (UMPK route): step 1/1. With respect to regulation, allosterically activated by GTP. Inhibited by UTP. Its function is as follows. Catalyzes the reversible phosphorylation of UMP to UDP. The sequence is that of Uridylate kinase from Streptococcus pyogenes serotype M2 (strain MGAS10270).